The primary structure comprises 428 residues: Glutamate-1-semialdehyde 2,1-aminomutase (428 aa).

Residue Lys267 is modified to N6-(pyridoxal phosphate)lysine.

The protein belongs to the class-III pyridoxal-phosphate-dependent aminotransferase family. HemL subfamily. As to quaternary structure, homodimer. The cofactor is pyridoxal 5'-phosphate.

Its subcellular location is the cytoplasm. The catalysed reaction is (S)-4-amino-5-oxopentanoate = 5-aminolevulinate. The protein operates within porphyrin-containing compound metabolism; protoporphyrin-IX biosynthesis; 5-aminolevulinate from L-glutamyl-tRNA(Glu): step 2/2. In Persephonella marina (strain DSM 14350 / EX-H1), this protein is Glutamate-1-semialdehyde 2,1-aminomutase.